A 187-amino-acid polypeptide reads, in one-letter code: Large ribosomal subunit protein bL17 (187 aa).

The interval 122–187 is disordered; sequence PKVRSSRTST…EADAAEKSDK (66 aa). The segment covering 127-144 has biased composition (low complexity); it reads SRTSTATAPAAAAPAAEA. 2 stretches are compositionally biased toward acidic residues: residues 145 to 157 and 165 to 180; these read PAEE…EETD and TPAE…VEAD.

The protein belongs to the bacterial ribosomal protein bL17 family. Part of the 50S ribosomal subunit. Contacts protein L32.

This Clavibacter michiganensis subsp. michiganensis (strain NCPPB 382) protein is Large ribosomal subunit protein bL17.